We begin with the raw amino-acid sequence, 94 residues long: Lipoate-protein ligase A subunit 2 (94 aa).

Heterodimer composed of LplA and LplB.

It carries out the reaction L-lysyl-[lipoyl-carrier protein] + (R)-lipoate + ATP = N(6)-[(R)-lipoyl]-L-lysyl-[lipoyl-carrier protein] + AMP + diphosphate + H(+). It participates in protein modification; protein lipoylation via exogenous pathway; protein N(6)-(lipoyl)lysine from lipoate: step 1/2. It functions in the pathway protein modification; protein lipoylation via exogenous pathway; protein N(6)-(lipoyl)lysine from lipoate: step 2/2. Functionally, part of a lipoate-protein ligase complex that catalyzes both the ATP-dependent activation of exogenously supplied lipoate to lipoyl-AMP and the transfer of the activated lipoyl onto the lipoyl domains of lipoate-dependent enzymes. Can also use octanoate as substrate. This Thermoplasma acidophilum (strain ATCC 25905 / DSM 1728 / JCM 9062 / NBRC 15155 / AMRC-C165) protein is Lipoate-protein ligase A subunit 2 (lplB).